The sequence spans 325 residues: Biotin synthase (325 aa).

The Radical SAM core domain occupies 36–254 (NEVQLAMLLS…IALARIMFPK (219 aa)). [4Fe-4S] cluster-binding residues include cysteine 51, cysteine 55, and cysteine 58. Residues cysteine 95, cysteine 126, cysteine 186, and arginine 258 each contribute to the [2Fe-2S] cluster site.

This sequence belongs to the radical SAM superfamily. Biotin synthase family. As to quaternary structure, homodimer. It depends on [4Fe-4S] cluster as a cofactor. [2Fe-2S] cluster is required as a cofactor.

The enzyme catalyses (4R,5S)-dethiobiotin + (sulfur carrier)-SH + 2 reduced [2Fe-2S]-[ferredoxin] + 2 S-adenosyl-L-methionine = (sulfur carrier)-H + biotin + 2 5'-deoxyadenosine + 2 L-methionine + 2 oxidized [2Fe-2S]-[ferredoxin]. The protein operates within cofactor biosynthesis; biotin biosynthesis; biotin from 7,8-diaminononanoate: step 2/2. Catalyzes the conversion of dethiobiotin (DTB) to biotin by the insertion of a sulfur atom into dethiobiotin via a radical-based mechanism. The polypeptide is Biotin synthase (Neorickettsia sennetsu (strain ATCC VR-367 / Miyayama) (Ehrlichia sennetsu)).